Consider the following 416-residue polypeptide: UPF0761 membrane protein Mpe_A1422 (416 aa).

6 helical membrane passes run 63 to 83 (IALV…PMFG), 120 to 140 (LGTV…LTID), 159 to 179 (VLVY…SLTL), 198 to 218 (LSVL…AGLF), 234 to 256 (GGLF…LAQV), and 271 to 291 (IFLI…VIAA).

The protein belongs to the UPF0761 family.

It is found in the cell inner membrane. The protein is UPF0761 membrane protein Mpe_A1422 of Methylibium petroleiphilum (strain ATCC BAA-1232 / LMG 22953 / PM1).